The chain runs to 798 residues: Disintegrin and metalloproteinase domain-containing protein B (798 aa).

An N-terminal signal peptide occupies residues 1–23; that stretch reads MKAFSCLLAVIATAASLFQHVDA. At 24–706 the chain is on the extracellular side; the sequence is SHARDKLNNI…VSDWVSRHKP (683 aa). 5 N-linked (GlcNAc...) asparagine glycosylation sites follow: Asn-32, Asn-226, Asn-227, Asn-313, and Asn-407. Residues 271-510 enclose the Peptidase M12B domain; sequence KVALIGVVAD…RTILTNCLTT (240 aa). Disulfide bonds link Cys-395/Cys-495, Cys-448/Cys-459, and Cys-580/Cys-600. Residue His-431 coordinates Zn(2+). Glu-432 is a catalytic residue. Residues His-435 and His-441 each contribute to the Zn(2+) site. One can recognise a Disintegrin domain in the interval 519–608; that stretch reads GQQCGNGIVE…DCPHDIHSKD (90 aa). A helical membrane pass occupies residues 707–727; that stretch reads IVIGVAVGAGCLLLLAIASCI. Over 728 to 798 the chain is Cytoplasmic; sequence CGRSRRQRPR…PGHMPPTRYA (71 aa). The disordered stretch occupies residues 734–798; it reads QRPRNRKMPP…PGHMPPTRYA (65 aa). Residues 775 to 792 are compositionally biased toward pro residues; the sequence is NNIPPPINAPPPAYPGHM.

Zn(2+) serves as cofactor.

It is found in the membrane. Functionally, probable zinc protease. This chain is Disintegrin and metalloproteinase domain-containing protein B (ADM-B), found in Trichophyton verrucosum (strain HKI 0517).